The sequence spans 180 residues: Endoribonuclease YbeY (180 aa).

Residues His118, His122, and His128 each contribute to the Zn(2+) site.

Belongs to the endoribonuclease YbeY family. Zn(2+) is required as a cofactor.

The protein localises to the cytoplasm. Single strand-specific metallo-endoribonuclease involved in late-stage 70S ribosome quality control and in maturation of the 3' terminus of the 16S rRNA. The sequence is that of Endoribonuclease YbeY from Rhodococcus jostii (strain RHA1).